The primary structure comprises 184 residues: Photosystem I assembly protein Ycf4 (184 aa).

2 helical membrane passes run 22–42 and 57–77; these read FCWAFILFLGSLGFLLVGTSS and IIFFPQGIVMSFYGIAGLFIS.

Belongs to the Ycf4 family.

The protein resides in the plastid. It localises to the chloroplast thylakoid membrane. Functionally, seems to be required for the assembly of the photosystem I complex. This Arabis hirsuta (Hairy rock-cress) protein is Photosystem I assembly protein Ycf4.